Consider the following 394-residue polypeptide: 1-deoxy-D-xylulose 5-phosphate reductoisomerase (394 aa).

The NADPH site is built by T14, G15, S16, I17, G40, and N128. K129 serves as a coordination point for 1-deoxy-D-xylulose 5-phosphate. Position 130 (E130) interacts with NADPH. Residue D154 coordinates Mn(2+). 1-deoxy-D-xylulose 5-phosphate-binding residues include S155, E156, S180, and H203. Mn(2+) is bound at residue E156. G209 provides a ligand contact to NADPH. 1-deoxy-D-xylulose 5-phosphate-binding residues include S216, N221, K222, and E225. E225 is a binding site for Mn(2+).

Belongs to the DXR family. Mg(2+) is required as a cofactor. Requires Mn(2+) as cofactor.

It carries out the reaction 2-C-methyl-D-erythritol 4-phosphate + NADP(+) = 1-deoxy-D-xylulose 5-phosphate + NADPH + H(+). It participates in isoprenoid biosynthesis; isopentenyl diphosphate biosynthesis via DXP pathway; isopentenyl diphosphate from 1-deoxy-D-xylulose 5-phosphate: step 1/6. Catalyzes the NADPH-dependent rearrangement and reduction of 1-deoxy-D-xylulose-5-phosphate (DXP) to 2-C-methyl-D-erythritol 4-phosphate (MEP). This chain is 1-deoxy-D-xylulose 5-phosphate reductoisomerase, found in Xylella fastidiosa (strain M23).